The following is a 63-amino-acid chain: Phylloseptin-Az1 (63 aa).

Residues 1–19 form the signal peptide; it reads LKKSLFLVVFLGLATLSIC. Positions 20-41 are excised as a propeptide; the sequence is EEEKRETEEEEYNQGEDDKSEE. Phenylalanine 62 carries the post-translational modification Phenylalanine amide.

Expressed by the skin glands.

It localises to the secreted. Has antimicrobial activity. The protein is Phylloseptin-Az1 of Pithecopus azureus (Orange-legged monkey tree frog).